Here is a 423-residue protein sequence, read N- to C-terminus: Putative serpin-Z12 (423 aa).

A disordered region spans residues 1-25 (MAALAAGEPFSGRATGGDGGVRSDV). Positions 370–394 (GTVAAASTAVVMMQKGSSLPPVDFV) are RCL.

It belongs to the serpin family.

Its function is as follows. Probable serine protease inhibitor. This is Putative serpin-Z12 from Oryza sativa subsp. japonica (Rice).